The following is a 446-amino-acid chain: Tubulin beta chain (446 aa).

GTP is bound by residues Gln-11, Glu-69, Ser-138, Gly-142, Thr-143, Gly-144, Asn-204, and Asn-226. Position 69 (Glu-69) interacts with Mg(2+). Residues 423–446 are disordered; that stretch reads QQYQDATADEEEGEYEEEPAEEEQ. A compositionally biased stretch (acidic residues) spans 429-446; it reads TADEEEGEYEEEPAEEEQ.

This sequence belongs to the tubulin family. Dimer of alpha and beta chains. A typical microtubule is a hollow water-filled tube with an outer diameter of 25 nm and an inner diameter of 15 nM. Alpha-beta heterodimers associate head-to-tail to form protofilaments running lengthwise along the microtubule wall with the beta-tubulin subunit facing the microtubule plus end conferring a structural polarity. Microtubules usually have 13 protofilaments but different protofilament numbers can be found in some organisms and specialized cells. It depends on Mg(2+) as a cofactor.

Its subcellular location is the cytoplasm. It localises to the cytoskeleton. In terms of biological role, tubulin is the major constituent of microtubules, a cylinder consisting of laterally associated linear protofilaments composed of alpha- and beta-tubulin heterodimers. Microtubules grow by the addition of GTP-tubulin dimers to the microtubule end, where a stabilizing cap forms. Below the cap, tubulin dimers are in GDP-bound state, owing to GTPase activity of alpha-tubulin. The sequence is that of Tubulin beta chain from Pleurotus sajor-caju (Oyster mushroom).